Here is a 247-residue protein sequence, read N- to C-terminus: tRNA uridine(34) hydroxylase (247 aa).

Residues 124–218 (TKQNVIVIDT…YLEDTHNKNN (95 aa)) form the Rhodanese domain. Cysteine 178 serves as the catalytic Cysteine persulfide intermediate.

It belongs to the TrhO family.

It catalyses the reaction uridine(34) in tRNA + AH2 + O2 = 5-hydroxyuridine(34) in tRNA + A + H2O. Catalyzes oxygen-dependent 5-hydroxyuridine (ho5U) modification at position 34 in tRNAs. This Rickettsia typhi (strain ATCC VR-144 / Wilmington) protein is tRNA uridine(34) hydroxylase.